A 305-amino-acid polypeptide reads, in one-letter code: Transmembrane protein 74 (305 aa).

Disordered regions lie at residues 52–88 (ATEM…LLHS) and 123–143 (RNRS…GWEN). Low complexity predominate over residues 58 to 78 (SKLSSSPASPSSSLQNSTLQP). A run of 2 helical transmembrane segments spans residues 178–198 (FISA…SYIV) and 232–252 (VIAG…LLMM).

Belongs to the TMEM74 family. Expressed in heart, lung, and placenta.

Its subcellular location is the lysosome membrane. The protein localises to the cytoplasmic vesicle. It localises to the autophagosome membrane. Its function is as follows. Plays an essential role in autophagy. TMEM74-induced autophagy may involve PI3K signal transduction. The protein is Transmembrane protein 74 (TMEM74) of Homo sapiens (Human).